The chain runs to 133 residues: MDKLEKSLDVWRELLSDERFRICRLGGTERAFSGEYYATSVPGVYHCACCDAPLFDSDAKYDAGCGWPSYFQPVAASALTSRDDYSHGMHRIEVLCARCDAHLGHVFPDGPPPTGLRYCINSASLRLKPRDEG.

In terms of domain architecture, MsrB spans 8 to 130; that stretch reads LDVWRELLSD…NSASLRLKPR (123 aa). Zn(2+)-binding residues include Cys47, Cys50, Cys96, and Cys99. The active-site Nucleophile is Cys119.

Belongs to the MsrB Met sulfoxide reductase family. Requires Zn(2+) as cofactor.

It catalyses the reaction L-methionyl-[protein] + [thioredoxin]-disulfide + H2O = L-methionyl-(R)-S-oxide-[protein] + [thioredoxin]-dithiol. This is Peptide methionine sulfoxide reductase MsrB from Azotobacter vinelandii (strain DJ / ATCC BAA-1303).